Here is a 246-residue protein sequence, read N- to C-terminus: tRNA pseudouridine synthase A (246 aa).

Aspartate 52 (nucleophile) is an active-site residue. Tyrosine 112 contacts substrate.

It belongs to the tRNA pseudouridine synthase TruA family. As to quaternary structure, homodimer.

It carries out the reaction uridine(38/39/40) in tRNA = pseudouridine(38/39/40) in tRNA. Formation of pseudouridine at positions 38, 39 and 40 in the anticodon stem and loop of transfer RNAs. The protein is tRNA pseudouridine synthase A of Pelagibacter ubique (strain HTCC1062).